Reading from the N-terminus, the 134-residue chain is Cytochrome b5 (134 aa).

The Cytochrome b5 heme-binding domain maps to 6-82; that stretch reads VKYFTRAEVA…MKQYKVGELV (77 aa). The heme site is built by His-41 and His-65. Residues 111–131 form a helical membrane-spanning segment; it reads WLMPFVLGLVATLIYKFFFGT.

It belongs to the cytochrome b5 family.

The protein localises to the endoplasmic reticulum membrane. It localises to the microsome membrane. Cytochrome b5 is a membrane bound hemoprotein which function as an electron carrier for several membrane bound oxygenases. The chain is Cytochrome b5 (Cyt-b5) from Musca domestica (House fly).